Here is a 447-residue protein sequence, read N- to C-terminus: N-succinylarginine dihydrolase (447 aa).

Substrate-binding positions include 19 to 28, asparagine 110, and 137 to 138; these read AGLSFGNEAS and HR. Glutamate 174 is an active-site residue. A substrate-binding site is contributed by arginine 213. Residue histidine 249 is part of the active site. Substrate-binding residues include aspartate 251 and asparagine 364. Residue cysteine 370 is the Nucleophile of the active site.

Belongs to the succinylarginine dihydrolase family. In terms of assembly, homodimer.

The enzyme catalyses N(2)-succinyl-L-arginine + 2 H2O + 2 H(+) = N(2)-succinyl-L-ornithine + 2 NH4(+) + CO2. It functions in the pathway amino-acid degradation; L-arginine degradation via AST pathway; L-glutamate and succinate from L-arginine: step 2/5. Catalyzes the hydrolysis of N(2)-succinylarginine into N(2)-succinylornithine, ammonia and CO(2). The sequence is that of N-succinylarginine dihydrolase from Yersinia enterocolitica serotype O:8 / biotype 1B (strain NCTC 13174 / 8081).